The chain runs to 353 residues: Photosystem II D2 protein (353 aa).

An N-acetylthreonine modification is found at Thr-2. Residue Thr-2 is modified to Phosphothreonine. A helical transmembrane segment spans residues 41-61 (CAYFALGGWFTGTTFVTSWYT). A chlorophyll a-binding site is contributed by His-118. A helical membrane pass occupies residues 125–141 (GFMLRQFELARSVQLRP). Residues Gln-130 and Asn-143 each coordinate pheophytin a. A helical transmembrane segment spans residues 153-166 (VFVSVFLIYPLGQS). Position 198 (His-198) interacts with chlorophyll a. A helical transmembrane segment spans residues 208-228 (AALLCAIHGATVENTLFEDGD). The a plastoquinone site is built by His-215 and Phe-262. His-215 provides a ligand contact to Fe cation. His-269 lines the Fe cation pocket. The chain crosses the membrane as a helical span at residues 279–295 (GLWMSAIGVVGLALNLR).

It belongs to the reaction center PufL/M/PsbA/D family. As to quaternary structure, PSII is composed of 1 copy each of membrane proteins PsbA, PsbB, PsbC, PsbD, PsbE, PsbF, PsbH, PsbI, PsbJ, PsbK, PsbL, PsbM, PsbT, PsbX, PsbY, PsbZ, Psb30/Ycf12, at least 3 peripheral proteins of the oxygen-evolving complex and a large number of cofactors. It forms dimeric complexes. The cofactor is The D1/D2 heterodimer binds P680, chlorophylls that are the primary electron donor of PSII, and subsequent electron acceptors. It shares a non-heme iron and each subunit binds pheophytin, quinone, additional chlorophylls, carotenoids and lipids. There is also a Cl(-1) ion associated with D1 and D2, which is required for oxygen evolution. The PSII complex binds additional chlorophylls, carotenoids and specific lipids..

It is found in the plastid. Its subcellular location is the chloroplast thylakoid membrane. It carries out the reaction 2 a plastoquinone + 4 hnu + 2 H2O = 2 a plastoquinol + O2. Photosystem II (PSII) is a light-driven water:plastoquinone oxidoreductase that uses light energy to abstract electrons from H(2)O, generating O(2) and a proton gradient subsequently used for ATP formation. It consists of a core antenna complex that captures photons, and an electron transfer chain that converts photonic excitation into a charge separation. The D1/D2 (PsbA/PsbD) reaction center heterodimer binds P680, the primary electron donor of PSII as well as several subsequent electron acceptors. D2 is needed for assembly of a stable PSII complex. This chain is Photosystem II D2 protein, found in Welwitschia mirabilis (Tree tumbo).